Here is a 759-residue protein sequence, read N- to C-terminus: Glycerol-3-phosphate O-acyltransferase 1 (759 aa).

At 1-48 (MPAPKLTEKFASSKSTQKTTNYSSIEAKSVKTSADQAYIYQEPSATKK) the chain is on the lumenal side. The chain crosses the membrane as a helical span at residues 49 to 69 (ILYSIATWLLYNIFHCFFREI). Residues 70-434 (RGRGSFKVPQ…AKVNFAKNLG (365 aa)) are Cytoplasmic-facing. Residues 414 to 419 (HYNLPD) carry the HXXXXD motif motif. The chain crosses the membrane as a helical span at residues 435 to 449 (LVFFRSIGLCILFSL). Position 450 (alanine 450) is a topological domain, lumenal. Residues 451-465 (MPGIIMFSPVFILAK) traverse the membrane as a helical segment. The Cytoplasmic segment spans residues 466–493 (RISQEKARTALSKSTVKIKANDVIATWK). The helical transmembrane segment at 494-514 (ILIGMGFAPLLYIFWSVLITY) threads the bilayer. The Lumenal portion of the chain corresponds to 515–523 (YLRHKPWNK). Residues 524–544 (IYVFSGSYISCVIVTYSALIV) form a helical membrane-spanning segment. Over 545 to 759 (GDIGMDGFKS…EEEEGKEGDA (215 aa)) the chain is Cytoplasmic. 3 disordered regions span residues 613–667 (EEDR…SLVN), 684–705 (RKSESSLASTSVAPSSSSEFEV), and 729–759 (IGENTAREEEEEEEEEEEEEEEEEEGKEGDA). Basic and acidic residues predominate over residues 647–659 (RDNHDAYEHHNQD). Residues 688–702 (SSLASTSVAPSSSSE) are compositionally biased toward low complexity. Residues 736–759 (EEEEEEEEEEEEEEEEEEGKEGDA) show a composition bias toward acidic residues.

The protein belongs to the GPAT/DAPAT family.

The protein localises to the endoplasmic reticulum membrane. It catalyses the reaction sn-glycerol 3-phosphate + an acyl-CoA = a 1-acyl-sn-glycero-3-phosphate + CoA. It carries out the reaction dihydroxyacetone phosphate + an acyl-CoA = a 1-acylglycerone 3-phosphate + CoA. The catalysed reaction is sn-glycerol 3-phosphate + hexadecanoyl-CoA = 1-hexadecanoyl-sn-glycero-3-phosphate + CoA. The enzyme catalyses (9Z)-hexadecenoyl-CoA + sn-glycerol 3-phosphate = 1-(9Z-hexadecenoyl)-sn-glycero-3-phosphate + CoA. It catalyses the reaction sn-glycerol 3-phosphate + octadecanoyl-CoA = 1-octadecanoyl-sn-glycero-3-phosphate + CoA. It carries out the reaction sn-glycerol 3-phosphate + (9Z)-octadecenoyl-CoA = 1-(9Z-octadecenoyl)-sn-glycero-3-phosphate + CoA. It participates in phospholipid metabolism; CDP-diacylglycerol biosynthesis; CDP-diacylglycerol from sn-glycerol 3-phosphate: step 1/3. Its function is as follows. Dual substrate-specific glycerol-3-phosphate/dihydroxyacetone phosphate sn-1 acyltransferase, catalyzing the first and committed reaction in the de novo synthesis of glycerophospholipids and triacylglycerols (TAGs). Prefers Gly-3-P over dihydroxyacetone phosphate and has a marked preference for 16-carbon fatty acyl chains. Transfers a fatty acid from fatty acyl-CoA to the sn-1 position of glycerol-3-phosphate to produce lysophosphatidic acid (LysoPA). These lipids not only are precursors of glycerolipids, but also are dynamic components of signal transduction systems that control cell physiology. SCT1 is the primary supplier of diacylglycerols (DAG), used mainly in TAG synthesis and phosphatidylcholine (PC) synthesis through the CDP-choline pathway. Regulates fatty acid desaturation, that is, the ratio of unsaturated versus saturated fatty acyl chains, by competing with the desaturase OLE1 for the common substrate C16:0-CoA. Sequesters C16:0-CoA into lipids, thereby shielding it from desaturation by OLE1. This is Glycerol-3-phosphate O-acyltransferase 1 from Saccharomyces cerevisiae (strain ATCC 204508 / S288c) (Baker's yeast).